The following is a 645-amino-acid chain: Synaptotagmin-16 (645 aa).

Disordered regions lie at residues 102–121 (AQNS…STMS), 144–192 (EHHL…DSDE), and 206–344 (QSFR…PSGV). Over residues 167–177 (ETVNGKKQVNS) the composition is skewed to polar residues. Acidic residues predominate over residues 179-192 (GDDEELSTSSDSDE). Over residues 287 to 303 (HQESSVVQSLRRQSTEG) the composition is skewed to polar residues. The C2 1 domain occupies 350 to 469 (KCGDLDVIFE…HPEGEMKVTL (120 aa)). The tract at residues 478-503 (SSGGSPLSPSAVSHSDSTSSTQSLSH) is disordered. Positions 485 to 502 (SPSAVSHSDSTSSTQSLS) are enriched in low complexity. Residues 505-640 (GAPELLVGLS…TKGQQICRWH (136 aa)) enclose the C2 2 domain.

This sequence belongs to the synaptotagmin family. Homodimer. Can also form heterodimers. As to expression, expressed in brain.

Functionally, may be involved in the trafficking and exocytosis of secretory vesicles in non-neuronal tissues. Is Ca(2+)-independent. The sequence is that of Synaptotagmin-16 (SYT16) from Homo sapiens (Human).